Here is a 288-residue protein sequence, read N- to C-terminus: Protein FANTASTIC FOUR 3 (288 aa).

Over residues 48-60 the composition is skewed to basic and acidic residues; the sequence is HAEDTRNRNDDKA. 3 disordered regions span residues 48–100, 146–172, and 222–261; these read HAED…YYVQ, ETTT…PLTT, and NEFV…IENV. Low complexity predominate over residues 66–90; that stretch reads SDSSGWSSLQSLSSGSSSSTKTTTS. In terms of domain architecture, FAF spans 165 to 217; the sequence is DLPPPLTTMRGFQCIQMRPHRENGRLVMTATNAPPRNGCFQADRSNGRLRLSI. A compositionally biased stretch (acidic residues) spans 223–256; sequence EFVENEEETIEPEETEEYEEEEEEEEDEDEDEVM.

It belongs to the fantastic four family. As to expression, expressed in the shoot apex, stamens, young leaves and young siliques, but not in old leaves. Detected in provascular and vascular tissue, but not in the vegetative meristem. In inflorescences, restricted to the vasculature and absent from young flowers, except from anthers.

Able to repress WUS when constitutively overexpressed, but have no effect on CLV3. The chain is Protein FANTASTIC FOUR 3 (FAF3) from Arabidopsis thaliana (Mouse-ear cress).